The sequence spans 314 residues: 4-hydroxy-3-methylbut-2-enyl diphosphate reductase (314 aa).

Cysteine 12 lines the [4Fe-4S] cluster pocket. Residues histidine 41 and histidine 74 each coordinate (2E)-4-hydroxy-3-methylbut-2-enyl diphosphate. Histidine 41 and histidine 74 together coordinate dimethylallyl diphosphate. 2 residues coordinate isopentenyl diphosphate: histidine 41 and histidine 74. Cysteine 96 contributes to the [4Fe-4S] cluster binding site. A (2E)-4-hydroxy-3-methylbut-2-enyl diphosphate-binding site is contributed by histidine 124. Residue histidine 124 participates in dimethylallyl diphosphate binding. Histidine 124 serves as a coordination point for isopentenyl diphosphate. Glutamate 126 acts as the Proton donor in catalysis. Threonine 168 contributes to the (2E)-4-hydroxy-3-methylbut-2-enyl diphosphate binding site. [4Fe-4S] cluster is bound at residue cysteine 198. (2E)-4-hydroxy-3-methylbut-2-enyl diphosphate contacts are provided by serine 226, serine 227, asparagine 228, and serine 270. Residues serine 226, serine 227, asparagine 228, and serine 270 each coordinate dimethylallyl diphosphate. Isopentenyl diphosphate is bound by residues serine 226, serine 227, asparagine 228, and serine 270.

The protein belongs to the IspH family. The cofactor is [4Fe-4S] cluster.

The enzyme catalyses isopentenyl diphosphate + 2 oxidized [2Fe-2S]-[ferredoxin] + H2O = (2E)-4-hydroxy-3-methylbut-2-enyl diphosphate + 2 reduced [2Fe-2S]-[ferredoxin] + 2 H(+). The catalysed reaction is dimethylallyl diphosphate + 2 oxidized [2Fe-2S]-[ferredoxin] + H2O = (2E)-4-hydroxy-3-methylbut-2-enyl diphosphate + 2 reduced [2Fe-2S]-[ferredoxin] + 2 H(+). Its pathway is isoprenoid biosynthesis; dimethylallyl diphosphate biosynthesis; dimethylallyl diphosphate from (2E)-4-hydroxy-3-methylbutenyl diphosphate: step 1/1. The protein operates within isoprenoid biosynthesis; isopentenyl diphosphate biosynthesis via DXP pathway; isopentenyl diphosphate from 1-deoxy-D-xylulose 5-phosphate: step 6/6. Its function is as follows. Catalyzes the conversion of 1-hydroxy-2-methyl-2-(E)-butenyl 4-diphosphate (HMBPP) into a mixture of isopentenyl diphosphate (IPP) and dimethylallyl diphosphate (DMAPP). Acts in the terminal step of the DOXP/MEP pathway for isoprenoid precursor biosynthesis. The chain is 4-hydroxy-3-methylbut-2-enyl diphosphate reductase from Ectopseudomonas mendocina (strain ymp) (Pseudomonas mendocina).